A 263-amino-acid polypeptide reads, in one-letter code: Tryptophan 2,3-dioxygenase (263 aa).

Substrate contacts are provided by residues 32 to 36, Tyr-94, and Arg-98; that span reads FIIVH. His-221 serves as a coordination point for heme. Thr-235 is a substrate binding site.

Belongs to the tryptophan 2,3-dioxygenase family. As to quaternary structure, homotetramer. Requires heme as cofactor.

It catalyses the reaction L-tryptophan + O2 = N-formyl-L-kynurenine. The protein operates within amino-acid degradation; L-tryptophan degradation via kynurenine pathway; L-kynurenine from L-tryptophan: step 1/2. Heme-dependent dioxygenase that catalyzes the oxidative cleavage of the L-tryptophan (L-Trp) pyrrole ring and converts L-tryptophan to N-formyl-L-kynurenine. Catalyzes the oxidative cleavage of the indole moiety. The sequence is that of Tryptophan 2,3-dioxygenase from Erythrobacter litoralis (strain HTCC2594).